The following is a 206-amino-acid chain: Large ribosomal subunit protein bL17 (206 aa).

Basic and acidic residues predominate over residues 130–141; sequence ERARGTRFEARR. Residues 130 to 206 form a disordered region; that stretch reads ERARGTRFEA…SGAGEQNSAN (77 aa). Composition is skewed to low complexity over residues 160–181 and 189–200; these read TAAA…GAAG and DDSGIGDDSGAG.

Belongs to the bacterial ribosomal protein bL17 family. Part of the 50S ribosomal subunit. Contacts protein L32.

The polypeptide is Large ribosomal subunit protein bL17 (Frankia casuarinae (strain DSM 45818 / CECT 9043 / HFP020203 / CcI3)).